A 149-amino-acid polypeptide reads, in one-letter code: L-alanine exporter AlaE (149 aa).

Helical transmembrane passes span 16-36, 46-66, 85-105, and 112-132; these read FAMV…LSGM, LVAI…RDLF, ILAY…VVGA, and AAVS…GYFL.

The protein belongs to the AlaE exporter family.

The protein localises to the cell inner membrane. Its function is as follows. Exports L-alanine. This Shigella flexneri protein is L-alanine exporter AlaE.